The sequence spans 31 residues: Cyclotide mden-L (31 aa).

The segment at residues 1–31 (GSIPCGESCVYIPCISAVLGCSCKNKVCYRN) is a cross-link (cyclopeptide (Gly-Asn)). 3 cysteine pairs are disulfide-bonded: Cys5/Cys21, Cys9/Cys23, and Cys14/Cys28.

It belongs to the cyclotide family. Bracelet subfamily. This is a cyclic peptide.

Functionally, probably participates in a plant defense mechanism. The protein is Cyclotide mden-L of Melicytus dentatus (Tree violet).